A 618-amino-acid polypeptide reads, in one-letter code: Grainyhead-like protein 1 homolog (618 aa).

A transcription activation region spans residues 1–91 (MTQEYDNKRP…EVEHPEPDHS (91 aa)). The segment covering 74–92 (RRSSTAKPEVEHPEPDHSK) has biased composition (basic and acidic residues). The segment at 74-94 (RRSSTAKPEVEHPEPDHSKRN) is disordered. Thr-208 is subject to Phosphothreonine. Positions 248–474 (SGNNFEYTLE…DLDTQPVLFI (227 aa)) constitute a Grh/CP2 DB domain. 2 interaction with DNA regions span residues 380–389 (TDFSSQKGVK) and 427–430 (RKIR).

The protein belongs to the grh/CP2 family. Grainyhead subfamily. In terms of assembly, binds DNA as homodimer. Homodimer, also forms heterodimers with GRHL2 or GRHL3. In terms of processing, methylation at Arg-9 and Lys-116 may be involved in regulating transcriptional activation. As to expression, isoform 1 is highly expressed in brain, pancreas, tonsil, placenta and kidney. Isoform 2 is highly expressed in brain and liver. Expressed at very low levels in non-steroidogenic cells.

The protein localises to the nucleus. Transcription factor involved in epithelial development. Binds directly to the consensus DNA sequence 5'-AACCGGTT-3'. Important regulator of DSG1 in the context of hair anchorage and epidermal differentiation, participates in the maintenance of the skin barrier. There is no genetic interaction with GRHL3, nor functional cooperativity due to diverse target gene selectivity during epithelia development. May play a role in regulating glucose homeostasis and insulin signaling. Functionally, functions as a transcription activator. In terms of biological role, may function as a repressor in tissues where both isoform 1 and isoform 2 are expressed. This Homo sapiens (Human) protein is Grainyhead-like protein 1 homolog.